The chain runs to 266 residues: Diphthine synthase (266 aa).

S-adenosyl-L-methionine is bound by residues Leu-9, Asp-84, Val-87, 112–113 (SI), Leu-169, Ala-210, and His-235.

Belongs to the diphthine synthase family. In terms of assembly, homodimer.

It catalyses the reaction 2-[(3S)-amino-3-carboxypropyl]-L-histidyl-[translation elongation factor 2] + 3 S-adenosyl-L-methionine = diphthine-[translation elongation factor 2] + 3 S-adenosyl-L-homocysteine + 3 H(+). The protein operates within protein modification; peptidyl-diphthamide biosynthesis. Functionally, S-adenosyl-L-methionine-dependent methyltransferase that catalyzes the trimethylation of the amino group of the modified target histidine residue in translation elongation factor 2 (EF-2), to form an intermediate called diphthine. The three successive methylation reactions represent the second step of diphthamide biosynthesis. In Methanosarcina barkeri (strain Fusaro / DSM 804), this protein is Diphthine synthase.